The chain runs to 428 residues: Putative UDP-glucose 6-dehydrogenase YtcA (428 aa).

An N-terminal signal peptide occupies residues methionine 1–glycine 23. Residues lysine 2–leucine 19, valine 11, aspartate 30, lysine 35, threonine 118, and glutamate 152 contribute to the NAD(+) site. Substrate-binding positions include glutamate 148–glutamate 152, lysine 203, asparagine 207, phenylalanine 248–glycine 252, and glycine 256. Cysteine 259 (nucleophile) is an active-site residue. Lysine 262 lines the NAD(+) pocket. Lysine 319 contacts substrate. An NAD(+)-binding site is contributed by arginine 326.

The protein belongs to the UDP-glucose/GDP-mannose dehydrogenase family.

The enzyme catalyses UDP-alpha-D-glucose + 2 NAD(+) + H2O = UDP-alpha-D-glucuronate + 2 NADH + 3 H(+). It participates in nucleotide-sugar biosynthesis; UDP-alpha-D-glucuronate biosynthesis; UDP-alpha-D-glucuronate from UDP-alpha-D-glucose: step 1/1. In terms of biological role, catalyzes the conversion of UDP-glucose into UDP-glucuronate, one of the precursors of teichuronic acid. The polypeptide is Putative UDP-glucose 6-dehydrogenase YtcA (ytcA) (Bacillus subtilis (strain 168)).